A 379-amino-acid chain; its full sequence is Cytochrome b (379 aa).

Transmembrane regions (helical) follow at residues 33 to 53 (FGSL…FLAM), 77 to 98 (WTIR…FIHV), 113 to 133 (WNVG…GYVL), and 178 to 198 (FFAL…IHLL). Residues H83 and H97 each coordinate heme b. Residues H182 and H196 each coordinate heme b. Residue H201 coordinates a ubiquinone. 4 helical membrane-spanning segments follow: residues 226–246 (TKDF…ALFY), 288–308 (LGGV…PFLQ), 320–340 (LSQF…WIGG), and 347–367 (FINI…FIMP).

Belongs to the cytochrome b family. In terms of assembly, the cytochrome bc1 complex contains 11 subunits: 3 respiratory subunits (MT-CYB, CYC1 and UQCRFS1), 2 core proteins (UQCRC1 and UQCRC2) and 6 low-molecular weight proteins (UQCRH/QCR6, UQCRB/QCR7, UQCRQ/QCR8, UQCR10/QCR9, UQCR11/QCR10 and a cleavage product of UQCRFS1). This cytochrome bc1 complex then forms a dimer. Heme b serves as cofactor.

The protein localises to the mitochondrion inner membrane. Its function is as follows. Component of the ubiquinol-cytochrome c reductase complex (complex III or cytochrome b-c1 complex) that is part of the mitochondrial respiratory chain. The b-c1 complex mediates electron transfer from ubiquinol to cytochrome c. Contributes to the generation of a proton gradient across the mitochondrial membrane that is then used for ATP synthesis. In Lepilemur dorsalis (Grey-backed sportive lemur), this protein is Cytochrome b (MT-CYB).